We begin with the raw amino-acid sequence, 754 residues long: Relaxin receptor 2 (754 aa).

At 1–416 the chain is on the extracellular side; sequence MIVFLVFKHL…SSFEDLLANN (416 aa). The LDL-receptor class A domain maps to 44-81; the sequence is SCQKGYFPCGNLTKCLPRAFHCDGKDDCGNGADEENCG. Disulfide bonds link C45–C58, C52–C71, and C65–C80. Residue N54 is glycosylated (N-linked (GlcNAc...) asparagine). N-linked (GlcNAc...) asparagine glycosylation is present at N138. LRR repeat units follow at residues 138 to 159, 162 to 183, 186 to 207, 210 to 231, 234 to 255, 258 to 279, 282 to 303, 306 to 327, 330 to 351, and 354 to 375; these read NVTL…VFIK, KLKK…AFFG, NLQI…IFKD, QLTW…LFTG, SLFF…MCAQ, QLNW…TFLS, SLTV…TFSS, NLGE…LFKD, LLQK…QFES, and QLQS…MFQP. An N-linked (GlcNAc...) asparagine glycan is attached at N274. The N-linked (GlcNAc...) asparagine glycan is linked to N335. N378 carries an N-linked (GlcNAc...) asparagine glycan. The chain crosses the membrane as a helical span at residues 417-437; the sequence is ILRIFVWVIAFITCFGNLFVI. At 438 to 455 the chain is on the cytoplasmic side; that stretch reads GMRSFIKAENTTHAMSIK. The helical transmembrane segment at 456 to 476 threads the bilayer; that stretch reads ILCCADCLMGVYLFFVGIFDI. Residues 477–495 lie on the Extracellular side of the membrane; it reads KYRGQYQKYALLWMESVQC. A disulfide bond links C495 and C573. The helical transmembrane segment at 496–518 threads the bilayer; it reads RLMGFLAMLSTEVSVLLLTYLTL. Residues 519–537 are Cytoplasmic-facing; it reads EKFLVIVFPFSNIRPGKRQ. A helical transmembrane segment spans residues 538–558; that stretch reads TSVILICIWMAGFLIAVIPFW. Over 559 to 592 the chain is Extracellular; sequence NKDYFGNFYGKNGVCFPLYYDQTEDIGSKGYSLG. A helical transmembrane segment spans residues 593 to 613; it reads IFLGVNLLAFLIIVFSYITMF. Residues 614 to 639 lie on the Cytoplasmic side of the membrane; sequence CSIQKTALQTTEVRNCFGREVAVANR. Residues 640 to 660 form a helical membrane-spanning segment; the sequence is FFFIVFSDAICWIPVFVVKIL. Residues 661–670 lie on the Extracellular side of the membrane; it reads SLFRVEIPDT. The chain crosses the membrane as a helical span at residues 671–691; it reads MTSWIVIFFLPVNSALNPILY. The Cytoplasmic portion of the chain corresponds to 692 to 754; it reads TLTTNFFKDK…LGDSIMKPVS (63 aa).

This sequence belongs to the G-protein coupled receptor 1 family. As to expression, expressed mainly in the brain, kidney, muscle, testis, thyroid, uterus, peripheral blood cells and bone marrow.

It is found in the cell membrane. Its function is as follows. Receptor for relaxin. The activity of this receptor is mediated by G proteins leading to stimulation of adenylate cyclase and an increase of cAMP. May also be a receptor for Leydig insulin-like peptide (INSL3). In Homo sapiens (Human), this protein is Relaxin receptor 2 (RXFP2).